Here is a 491-residue protein sequence, read N- to C-terminus: Beta-galactosidase (491 aa).

The active-site Proton donor is the glutamate 209. The active-site Nucleophile is glutamate 389.

This sequence belongs to the glycosyl hydrolase 1 family.

The enzyme catalyses Hydrolysis of terminal non-reducing beta-D-galactose residues in beta-D-galactosides.. The protein is Beta-galactosidase (bgaS) of Sulfolobus acidocaldarius (strain ATCC 33909 / DSM 639 / JCM 8929 / NBRC 15157 / NCIMB 11770).